Reading from the N-terminus, the 135-residue chain is ATP synthase epsilon chain (135 aa).

This sequence belongs to the ATPase epsilon chain family. In terms of assembly, F-type ATPases have 2 components, CF(1) - the catalytic core - and CF(0) - the membrane proton channel. CF(1) has five subunits: alpha(3), beta(3), gamma(1), delta(1), epsilon(1). CF(0) has three main subunits: a, b and c.

The protein resides in the cell inner membrane. Functionally, produces ATP from ADP in the presence of a proton gradient across the membrane. The protein is ATP synthase epsilon chain of Rhodopseudomonas palustris (strain BisB18).